The chain runs to 337 residues: m7GpppX diphosphatase (337 aa).

Residues 1–37 (MAELAHQQSKRKRELDAEEAEASSTEGEEAGVGNGTS) form a disordered region. A2 carries the N-acetylalanine modification. The short motif at 10 to 13 (KRKR) is the nuclear localization signal (NLS) element. The segment covering 16–29 (DAEEAEASSTEGEE) has biased composition (acidic residues). A phosphoserine mark is found at S24 and S101. Residues K138 and K142 each carry the N6-acetyllysine modification. A nuclear export sequence (NES) motif is present at residues 142-154 (KYLRQDLHLVRET). Substrate-binding positions include W175, E185, D205, K207, and 268-279 (HYLPSYYHLHVH). The short motif at 275-279 (HLHVH) is the Histidine triad motif element. H277 (nucleophile) is an active-site residue.

This sequence belongs to the HIT family. In terms of assembly, homodimer. Associates with components of the exosome multienzyme ribonuclease complex, such as EXOSC3 and EXOSC4. Interacts with NDOR1.

It is found in the cytoplasm. It localises to the nucleus. The catalysed reaction is a 5'-end (N(7)-methyl 5'-triphosphoguanosine)-ribonucleoside in mRNA + H2O = N(7)-methyl-GMP + a 5'-end diphospho-ribonucleoside in mRNA + 2 H(+). With respect to regulation, the hydrolytic product 7-methylguanosine diphosphate (m7GDP) efficiently inhibits the decapping scavenger activity and acts as a competitive inhibitor in vitro. Inhibited by 2,4-diaminoquinazoline. In terms of biological role, decapping scavenger enzyme that catalyzes the cleavage of a residual cap structure following the degradation of mRNAs by 3'-&gt;5' exosome-mediated mRNA decay pathway. Hydrolyzes cap analog structures like 7-methylguanosine nucleoside triphosphate (m7GpppG) with up to 10 nucleotide substrates (small capped oligoribonucleotides) and specifically releases 5'-phosphorylated RNA fragments and 7-methylguanosine monophosphate (m7GMP). Cleaves cap analog structures like tri-methyl guanosine nucleoside triphosphate (m3(2,2,7)GpppG) with very poor efficiency. Does not hydrolyze unmethylated cap analog (GpppG) and shows no decapping activity on intact m7GpppG-capped mRNA molecules longer than 25 nucleotides. Does not hydrolyze 7-methylguanosine diphosphate (m7GDP) to m7GMP. May also play a role in the 5'-&gt;3 mRNA decay pathway; m7GDP, the downstream product released by the 5'-&gt;3' mRNA mediated decapping activity, may be also converted by DCPS to m7GMP. Binds to m7GpppG and strongly to m7GDP. Plays a role in first intron splicing of pre-mRNAs. Inhibits activation-induced cell death. The chain is m7GpppX diphosphatase (DCPS) from Bos taurus (Bovine).